Reading from the N-terminus, the 219-residue chain is Proteasome subunit beta type-9 (219 aa).

A propeptide spans Met-1–Gly-20 (removed in mature form). Thr-21 functions as the Nucleophile in the catalytic mechanism. Residues Lys-53 and Lys-109 each carry the N6-acetyllysine modification.

Belongs to the peptidase T1B family. In terms of assembly, the 26S proteasome consists of a 20S proteasome core and two 19S regulatory subunits. The 20S proteasome core is composed of 28 subunits that are arranged in four stacked rings, resulting in a barrel-shaped structure. The two end rings are each formed by seven alpha subunits, and the two central rings are each formed by seven beta subunits. The catalytic chamber with the active sites is on the inside of the barrel. Component of the immunoproteasome, where it displaces the equivalent housekeeping subunit PSMB6. Component of the spermatoproteasome, a form of the proteasome specifically found in testis. In terms of processing, autocleaved. The resulting N-terminal Thr residue of the mature subunit is responsible for the nucleophile proteolytic activity.

The protein resides in the cytoplasm. Its subcellular location is the nucleus. The catalysed reaction is Cleavage of peptide bonds with very broad specificity.. Its function is as follows. The proteasome is a multicatalytic proteinase complex which is characterized by its ability to cleave peptides with Arg, Phe, Tyr, Leu, and Glu adjacent to the leaving group at neutral or slightly basic pH. The proteasome has an ATP-dependent proteolytic activity. This subunit is involved in antigen processing to generate class I binding peptides. This chain is Proteasome subunit beta type-9 (Psmb9), found in Mus platythrix (Flat-haired mouse).